The chain runs to 368 residues: Histidinol-phosphate aminotransferase (368 aa).

Lys-228 bears the N6-(pyridoxal phosphate)lysine mark.

Belongs to the class-II pyridoxal-phosphate-dependent aminotransferase family. Histidinol-phosphate aminotransferase subfamily. Homodimer. The cofactor is pyridoxal 5'-phosphate.

It carries out the reaction L-histidinol phosphate + 2-oxoglutarate = 3-(imidazol-4-yl)-2-oxopropyl phosphate + L-glutamate. Its pathway is amino-acid biosynthesis; L-histidine biosynthesis; L-histidine from 5-phospho-alpha-D-ribose 1-diphosphate: step 7/9. This chain is Histidinol-phosphate aminotransferase (hisC), found in Methylobacillus flagellatus.